The following is a 209-amino-acid chain: Rac-like GTP-binding protein ARAC9 (209 aa).

25–32 serves as a coordination point for GTP; sequence GDGAVGKT. The Effector region signature appears at 47–55; it reads YVPTVFDNF. Residues 72–76 and 130–133 each bind GTP; these read DTAGQ and TKSD. Residue Cys206 is modified to Cysteine methyl ester. The S-geranylgeranyl cysteine moiety is linked to residue Cys206. Residues 207 to 209 constitute a propeptide, removed in mature form; that stretch reads HVL.

It belongs to the small GTPase superfamily. Rho family. In terms of assembly, interacts with SPK1.

It is found in the cytoplasm. It localises to the membrane. Its function is as follows. Inactive GDP-bound Rho GTPases reside in the cytosol, are found in a complex with Rho GDP-dissociation inhibitors (Rho GDIs), and are released from the GDI protein in order to translocate to membranes upon activation. The chain is Rac-like GTP-binding protein ARAC9 (ARAC9) from Arabidopsis thaliana (Mouse-ear cress).